The sequence spans 86 residues: Co-chaperonin GroES (86 aa).

The protein belongs to the GroES chaperonin family. Heptamer of 7 subunits arranged in a ring. Interacts with the chaperonin GroEL.

It localises to the cytoplasm. Functionally, together with the chaperonin GroEL, plays an essential role in assisting protein folding. The GroEL-GroES system forms a nano-cage that allows encapsulation of the non-native substrate proteins and provides a physical environment optimized to promote and accelerate protein folding. GroES binds to the apical surface of the GroEL ring, thereby capping the opening of the GroEL channel. The chain is Co-chaperonin GroES from Campylobacter lari (strain RM2100 / D67 / ATCC BAA-1060).